The chain runs to 438 residues: Aspartyl protease 25 (438 aa).

Positions 1-23 (MAATTTIPLLLLLLAATVAAAAA) are cleaved as a signal peptide. Residues 79–433 (YVVRAGLGSP…DVANSRVGFA (355 aa)) form the Peptidase A1 domain. Asp97 is a catalytic residue. The cysteines at positions 107 and 113 are disulfide-linked. N-linked (GlcNAc...) asparagine glycans are attached at residues Asn123, Asn193, and Asn282. Asp313 is a catalytic residue. Cys352 and Cys394 are oxidised to a cystine.

This sequence belongs to the peptidase A1 family.

Functionally, anther-specific aspartic protease involved in tapetal programmed cell death (PCD). Directly regulated by the transcription factor EAT1/DTD in anthers during tapetum PCD and degeneration. This chain is Aspartyl protease 25, found in Oryza sativa subsp. japonica (Rice).